Reading from the N-terminus, the 85-residue chain is Conotoxin Cap15b (85 aa).

The signal sequence occupies residues 1–23; the sequence is MEKLTFLILVATVLLTIHVLVQS. A propeptide spanning residues 24–49 is cleaved from the precursor; the sequence is DGDKHLKRRPKQYATKRLSALMRGHR. Position 50 is a pyrrolidone carboxylic acid (Gln-50).

It belongs to the conotoxin O2 superfamily. In terms of processing, contains 4 disulfide bonds. As to expression, expressed by the venom duct.

Its subcellular location is the secreted. This Conus capitaneus (Captain cone) protein is Conotoxin Cap15b.